We begin with the raw amino-acid sequence, 37 residues long: Diptericin (37 aa).

The interval 1-37 (DLHIPPPDNKINWPQLSGGGGGSPKTGYDININAQQK) is disordered.

This sequence belongs to the attacin/sarcotoxin-2 family. Synthesized by the fat body and secreted into the hemolymph.

The protein localises to the secreted. Acute phase protein with antibacterial activity against the Gram-negative bacteria E.coli (MIC=6.25 ug/ml) and S.sonnei (MIC=12.5 ug/ml). Lacks antibacterial activity against the Gram-negative bacteria P.vulgaris, P.rettgeri and P.aeruginosa, and against the Gram-positive bacteria B.subtilis, S.aureus, M.luteus, B.megaterium, C.bovis and E.cloacae. This Sarcophaga peregrina (Flesh fly) protein is Diptericin.